The primary structure comprises 378 residues: MDFYRLLLRPLLLSQLNVDPEWLTRNALGFLATLARSRSPLAANLRSYLRQTYGFQDPRLAMSLWGLTFATPVGLAAGFDKDGIAAPLWSDLGFGFAELGTVTALAQPGNPRPRLFRIPQDLAAFNRMGFNNASAEALADTLRGYFPEGQRSIPIGINLGKSKLTPLSGAVSDYVSSFRSLRSLGDYFVVNVSSPNTPGLRSLQAVTELEPILAALQAENTEQRPLLLKIAPDLVDEEVVAIAHLAQRQQLAGIIATNTTIDKSLLSVEHLPGRREPLATEAGGISGAPLRSRSTEVIRLLHRTTQGQLPIIGVGGIFSAEDAWQKIVAGASLVQVYTGWVYEGPLLVKTIQQGLLERLDSAGLPNLAAAVGSAAIDS.

FMN is bound by residues 77–81 and Thr-101; that span reads AGFDK. Substrate is bound at residue Lys-81. Position 126-130 (126-130) interacts with substrate; the sequence is NRMGF. Residues Asn-158 and Asn-191 each coordinate FMN. Asn-191 contacts substrate. Ser-194 (nucleophile) is an active-site residue. Asn-196 is a substrate binding site. Lys-229 and Thr-257 together coordinate FMN. Residue 258–259 coordinates substrate; the sequence is NT. Residues Gly-287, Gly-316, and 337–338 each bind FMN; that span reads YT.

It belongs to the dihydroorotate dehydrogenase family. Type 2 subfamily. As to quaternary structure, monomer. Requires FMN as cofactor.

Its subcellular location is the cell membrane. It catalyses the reaction (S)-dihydroorotate + a quinone = orotate + a quinol. The protein operates within pyrimidine metabolism; UMP biosynthesis via de novo pathway; orotate from (S)-dihydroorotate (quinone route): step 1/1. Catalyzes the conversion of dihydroorotate to orotate with quinone as electron acceptor. The protein is Dihydroorotate dehydrogenase (quinone) of Synechococcus elongatus (strain ATCC 33912 / PCC 7942 / FACHB-805) (Anacystis nidulans R2).